Consider the following 268-residue polypeptide: MLTILAVSDSIGETANQVAVAAASQFTEKVDVKRIPYVKSLEDVEDVMNIANECESVIIVSTIITVNVREHLTQKAMEKNISVMNVLGPIINVASTILNTHPTYNPGAMRQTDEVYFKRIEAMEFAMQYDDSKDYRGLKNADVVLIGLSRTSKTPLCMYLANKGVKAINIPLMPEVGVPDEIYEIDRKKVFGLTINPLRLIEIRKRRLDKFHRITSDIEYAGDARVLEELDFADKIMRKIGCKTIDVTERAIEDTALIILEKIGYNNK.

147 to 154 (GLSRTSKT) lines the ADP pocket.

This sequence belongs to the pyruvate, phosphate/water dikinase regulatory protein family. PDRP subfamily.

It carries out the reaction N(tele)-phospho-L-histidyl/L-threonyl-[pyruvate, phosphate dikinase] + ADP = N(tele)-phospho-L-histidyl/O-phospho-L-threonyl-[pyruvate, phosphate dikinase] + AMP + H(+). The catalysed reaction is N(tele)-phospho-L-histidyl/O-phospho-L-threonyl-[pyruvate, phosphate dikinase] + phosphate + H(+) = N(tele)-phospho-L-histidyl/L-threonyl-[pyruvate, phosphate dikinase] + diphosphate. Functionally, bifunctional serine/threonine kinase and phosphorylase involved in the regulation of the pyruvate, phosphate dikinase (PPDK) by catalyzing its phosphorylation/dephosphorylation. This is Putative pyruvate, phosphate dikinase regulatory protein from Clostridium beijerinckii (strain ATCC 51743 / NCIMB 8052) (Clostridium acetobutylicum).